The chain runs to 442 residues: Exodeoxyribonuclease 7 large subunit (442 aa).

This sequence belongs to the XseA family. Heterooligomer composed of large and small subunits.

Its subcellular location is the cytoplasm. The catalysed reaction is Exonucleolytic cleavage in either 5'- to 3'- or 3'- to 5'-direction to yield nucleoside 5'-phosphates.. Its function is as follows. Bidirectionally degrades single-stranded DNA into large acid-insoluble oligonucleotides, which are then degraded further into small acid-soluble oligonucleotides. The polypeptide is Exodeoxyribonuclease 7 large subunit (Shewanella sediminis (strain HAW-EB3)).